Here is a 532-residue protein sequence, read N- to C-terminus: MIQAQESITLEDVAVDFTWEEWQLLGAAQKDLYRDVMLENYSNLVAVGYQASKPDALFKLEQGEQLWTIEDGIHSGACSDIWKVDHVLERLQSESLVNRRKPCHEHDAFENIVHCSKSQFLLGQNHDIFDLRGKSLKSNLTLVNQSKGYEIKNSVEFTGNGDSFLHANHERLHTAIKFPASQKLISTKSQFISPKHQKTRKLEKHHVCSECGKAFIKKSWLTDHQVMHTGEKPHRCSLCEKAFSRKFMLTEHQRTHTGEKPYECPECGKAFLKKSRLNIHQKTHTGEKPYICSECGKGFIQKGNLIVHQRIHTGEKPYICNECGKGFIQKTCLIAHQRFHTGKTPFVCSECGKSCSQKSGLIKHQRIHTGEKPFECSECGKAFSTKQKLIVHQRTHTGERPYGCNECGKAFAYMSCLVKHKRIHTREKQEAAKVENPPAERHSSLHTSDVMQEKNSANGATTQVPSVAPQTSLNISGLLANRNVVLVGQPVVRCAASGDNRGFAQDRNLVNAVNVVVPSVINYVLFYVTENP.

The KRAB domain occupies 8–79; sequence ITLEDVAVDF…EDGIHSGACS (72 aa). 8 consecutive C2H2-type zinc fingers follow at residues 206–228, 234–256, 262–284, 290–312, 318–340, 346–368, 374–396, and 402–424; these read HVCS…QVMH, HRCS…QRTH, YECP…QKTH, YICS…QRIH, YICN…QRFH, FVCS…QRIH, FECS…QRTH, and YGCN…KRIH. The span at 427–443 shows a compositional bias: basic and acidic residues; sequence EKQEAAKVENPPAERHS. Residues 427–465 are disordered; the sequence is EKQEAAKVENPPAERHSSLHTSDVMQEKNSANGATTQVP. The segment covering 445–465 has biased composition (polar residues); the sequence is LHTSDVMQEKNSANGATTQVP.

It belongs to the krueppel C2H2-type zinc-finger protein family. Interacts with BRCA1. Interacts with RNF11. Widely expressed.

It localises to the nucleus. The protein localises to the nucleus matrix. Its function is as follows. Transcriptional repressor. Binds to a specific sequence, 5'-GGGxxxCAGxxxTTT-3', within GADD45 intron 3. This chain is Zinc finger protein 350 (ZNF350), found in Homo sapiens (Human).